The chain runs to 313 residues: Carbamate kinase 2 (313 aa).

It belongs to the carbamate kinase family.

The protein localises to the cytoplasm. The catalysed reaction is hydrogencarbonate + NH4(+) + ATP = carbamoyl phosphate + ADP + H2O + H(+). It participates in metabolic intermediate metabolism; carbamoyl phosphate degradation; CO(2) and NH(3) from carbamoyl phosphate: step 1/1. This Staphylococcus aureus (strain Mu50 / ATCC 700699) protein is Carbamate kinase 2 (arcC2).